We begin with the raw amino-acid sequence, 204 residues long: CASP-like protein 3A1 (204 aa).

Topologically, residues methionine 1–valine 39 are cytoplasmic. The helical transmembrane segment at valine 40–isoleucine 60 threads the bilayer. Topologically, residues serine 61–glutamate 88 are extracellular. Asparagine 80 carries N-linked (GlcNAc...) asparagine glycosylation. A helical membrane pass occupies residues tyrosine 89–alanine 109. The Cytoplasmic segment spans residues histidine 110–tyrosine 124. The helical transmembrane segment at alanine 125 to alanine 145 threads the bilayer. The Extracellular portion of the chain corresponds to alanine 146–serine 179. A glycan (N-linked (GlcNAc...) asparagine) is linked at asparagine 153. The helical transmembrane segment at isoleucine 180–tryptophan 200 threads the bilayer. The Cytoplasmic portion of the chain corresponds to leucine 201 to methionine 204.

This sequence belongs to the Casparian strip membrane proteins (CASP) family. As to quaternary structure, homodimer and heterodimers.

The protein localises to the cell membrane. The polypeptide is CASP-like protein 3A1 (Oryza sativa subsp. indica (Rice)).